The following is a 90-amino-acid chain: Small ribosomal subunit protein uS15c (90 aa).

The protein belongs to the universal ribosomal protein uS15 family. Part of the 30S ribosomal subunit.

It is found in the plastid. Its subcellular location is the chloroplast. This is Small ribosomal subunit protein uS15c (rps15-A) from Ipomoea purpurea (Common morning glory).